The sequence spans 994 residues: Regulator of telomere elongation helicase 1 homolog (994 aa).

A Helicase ATP-binding domain is found at 15–324 (SKTSIKFPFE…KLIENLRTED (310 aa)). 50 to 57 (SPTGTGKT) lines the ATP pocket. The [4Fe-4S] cluster site is built by Cys-142, Cys-160, Cys-169, and Cys-208. The DEAH box motif lies at 251–254 (DEAH). A compositionally biased stretch (basic and acidic residues) spans 818–831 (KIEKKEKIEPRPIK). The tract at residues 818–896 (KIEKKEKIEP…HVVSGSEPPK (79 aa)) is disordered. Residues 833–844 (DSSSSSVFSLPT) are compositionally biased toward polar residues. Over residues 847–856 (DELKVKKWEQ) the composition is skewed to basic and acidic residues. Composition is skewed to polar residues over residues 859 to 869 (DSQTNVSSSSD) and 880 to 889 (PGNSSGQHVV).

It belongs to the helicase family. RAD3/XPD subfamily.

The protein resides in the nucleus. It carries out the reaction ATP + H2O = ADP + phosphate + H(+). In terms of biological role, a probable ATP-dependent DNA helicase implicated in DNA repair and the maintenance of genomic stability. Acts as an anti-recombinase to counteract toxic recombination and limit crossover during meiosis. Regulates meiotic recombination and crossover homeostasis by physically dissociating strand invasion events and thereby promotes noncrossover repair by meiotic synthesis dependent strand annealing (SDSA) as well as disassembly of D loop recombination intermediates. In Caenorhabditis briggsae, this protein is Regulator of telomere elongation helicase 1 homolog.